A 287-amino-acid chain; its full sequence is Ribosomal RNA small subunit methyltransferase A (287 aa).

Residues Asn-28, Leu-30, Gly-55, Glu-77, Asp-103, and Asn-123 each contribute to the S-adenosyl-L-methionine site.

It belongs to the class I-like SAM-binding methyltransferase superfamily. rRNA adenine N(6)-methyltransferase family. RsmA subfamily.

The protein localises to the cytoplasm. The catalysed reaction is adenosine(1518)/adenosine(1519) in 16S rRNA + 4 S-adenosyl-L-methionine = N(6)-dimethyladenosine(1518)/N(6)-dimethyladenosine(1519) in 16S rRNA + 4 S-adenosyl-L-homocysteine + 4 H(+). Functionally, specifically dimethylates two adjacent adenosines (A1518 and A1519) in the loop of a conserved hairpin near the 3'-end of 16S rRNA in the 30S particle. May play a critical role in biogenesis of 30S subunits. This Rhodopseudomonas palustris (strain TIE-1) protein is Ribosomal RNA small subunit methyltransferase A.